The following is a 363-amino-acid chain: NAD(P)H-quinone oxidoreductase subunit 1, chloroplastic (363 aa).

8 consecutive transmembrane segments (helical) span residues L27–L47, W93–V113, L124–M144, A162–L182, I200–L220, F250–V270, A303–L323, and F343–L363.

This sequence belongs to the complex I subunit 1 family. In terms of assembly, NDH is composed of at least 16 different subunits, 5 of which are encoded in the nucleus.

It localises to the plastid. The protein localises to the chloroplast thylakoid membrane. The enzyme catalyses a plastoquinone + NADH + (n+1) H(+)(in) = a plastoquinol + NAD(+) + n H(+)(out). The catalysed reaction is a plastoquinone + NADPH + (n+1) H(+)(in) = a plastoquinol + NADP(+) + n H(+)(out). In terms of biological role, NDH shuttles electrons from NAD(P)H:plastoquinone, via FMN and iron-sulfur (Fe-S) centers, to quinones in the photosynthetic chain and possibly in a chloroplast respiratory chain. The immediate electron acceptor for the enzyme in this species is believed to be plastoquinone. Couples the redox reaction to proton translocation, and thus conserves the redox energy in a proton gradient. This chain is NAD(P)H-quinone oxidoreductase subunit 1, chloroplastic, found in Chaetosphaeridium globosum (Charophycean green alga).